The sequence spans 330 residues: ADP-L-glycero-D-manno-heptose-6-epimerase (330 aa).

NADP(+)-binding positions include 11–12, 32–33, Lys39, Lys54, 75–79, and Asn92; these read FI, DN, and EGACS. Residue Tyr139 is the Proton acceptor of the active site. Lys143 is a binding site for NADP(+). Asn168 contributes to the substrate binding site. Residues Val169 and Lys177 each coordinate NADP(+). Lys177 serves as the catalytic Proton acceptor. Substrate contacts are provided by residues Arg179, His186, 200–203, Arg213, and Tyr292; that span reads FGEY.

Belongs to the NAD(P)-dependent epimerase/dehydratase family. HldD subfamily. In terms of assembly, homopentamer. The cofactor is NADP(+).

It carries out the reaction ADP-D-glycero-beta-D-manno-heptose = ADP-L-glycero-beta-D-manno-heptose. Its pathway is nucleotide-sugar biosynthesis; ADP-L-glycero-beta-D-manno-heptose biosynthesis; ADP-L-glycero-beta-D-manno-heptose from D-glycero-beta-D-manno-heptose 7-phosphate: step 4/4. Its function is as follows. Catalyzes the interconversion between ADP-D-glycero-beta-D-manno-heptose and ADP-L-glycero-beta-D-manno-heptose via an epimerization at carbon 6 of the heptose. This Paraburkholderia phymatum (strain DSM 17167 / CIP 108236 / LMG 21445 / STM815) (Burkholderia phymatum) protein is ADP-L-glycero-D-manno-heptose-6-epimerase.